Consider the following 347-residue polypeptide: Protein RecA (347 aa).

Gly80–Thr87 provides a ligand contact to ATP.

It belongs to the RecA family.

The protein resides in the cytoplasm. Can catalyze the hydrolysis of ATP in the presence of single-stranded DNA, the ATP-dependent uptake of single-stranded DNA by duplex DNA, and the ATP-dependent hybridization of homologous single-stranded DNAs. It interacts with LexA causing its activation and leading to its autocatalytic cleavage. In Chlorobaculum parvum (strain DSM 263 / NCIMB 8327) (Chlorobium vibrioforme subsp. thiosulfatophilum), this protein is Protein RecA.